Here is a 262-residue protein sequence, read N- to C-terminus: 3-methyl-2-oxobutanoate hydroxymethyltransferase (262 aa).

Mg(2+)-binding residues include D44 and D83. 3-methyl-2-oxobutanoate is bound by residues 44–45 (DS), D83, and K112. E114 contacts Mg(2+). Residue E181 is the Proton acceptor of the active site.

Belongs to the PanB family. Homodecamer; pentamer of dimers. It depends on Mg(2+) as a cofactor.

Its subcellular location is the cytoplasm. The enzyme catalyses 3-methyl-2-oxobutanoate + (6R)-5,10-methylene-5,6,7,8-tetrahydrofolate + H2O = 2-dehydropantoate + (6S)-5,6,7,8-tetrahydrofolate. Its pathway is cofactor biosynthesis; (R)-pantothenate biosynthesis; (R)-pantoate from 3-methyl-2-oxobutanoate: step 1/2. Functionally, catalyzes the reversible reaction in which hydroxymethyl group from 5,10-methylenetetrahydrofolate is transferred onto alpha-ketoisovalerate to form ketopantoate. The polypeptide is 3-methyl-2-oxobutanoate hydroxymethyltransferase (Thiobacillus denitrificans (strain ATCC 25259 / T1)).